The sequence spans 344 residues: Sulfate/thiosulfate import ATP-binding protein CysA (344 aa).

Residues 3–233 form the ABC transporter domain; that stretch reads ILIDNVSKNF…PESAFVMSFL (231 aa). 35–42 provides a ligand contact to ATP; sequence GPSGCGKS.

It belongs to the ABC transporter superfamily. Sulfate/tungstate importer (TC 3.A.1.6) family. As to quaternary structure, the complex is composed of two ATP-binding proteins (CysA), two transmembrane proteins (CysT and CysW) and a solute-binding protein (CysP).

It is found in the cell inner membrane. The enzyme catalyses sulfate(out) + ATP + H2O = sulfate(in) + ADP + phosphate + H(+). It carries out the reaction thiosulfate(out) + ATP + H2O = thiosulfate(in) + ADP + phosphate + H(+). In terms of biological role, part of the ABC transporter complex CysAWTP involved in sulfate/thiosulfate import. Responsible for energy coupling to the transport system. The chain is Sulfate/thiosulfate import ATP-binding protein CysA from Gloeobacter violaceus (strain ATCC 29082 / PCC 7421).